The chain runs to 513 residues: Beta-amyrin 24-hydroxylase (513 aa).

The helical; Signal-anchor transmembrane segment at 1-21 (MLDIKGYLVLFFLWFISTILI) threads the bilayer. Position 451 (Cys-451) interacts with heme.

It belongs to the cytochrome P450 family. It depends on heme as a cofactor.

It is found in the membrane. It catalyses the reaction beta-amyrin + reduced [NADPH--hemoprotein reductase] + O2 = 24-hydroxy-beta-amyrin + oxidized [NADPH--hemoprotein reductase] + H2O + H(+). The catalysed reaction is sophoradiol + reduced [NADPH--hemoprotein reductase] + O2 = soyasapogenol B + oxidized [NADPH--hemoprotein reductase] + H2O + H(+). Functionally, heme-containing cytochrome P450 involved in the biosynthesis of soyasaponins. Hydroxylates specifically the C-24 methyl group of the triterpenes beta-amyrin and sophoradiol. No activity with lupeol, butyrospermol, tirucalla-7,21-dien-3beta-ol, taraxasterol, psi-taraxasterol, bauerenol, alpha-amyrin and multiflorenol as substrates. This chain is Beta-amyrin 24-hydroxylase (CYP93E1), found in Glycine max (Soybean).